Reading from the N-terminus, the 366-residue chain is Ferredoxin--NADP reductase (366 aa).

Aspartate 51, glutamine 59, tyrosine 64, valine 104, phenylalanine 139, aspartate 308, and threonine 349 together coordinate FAD.

It belongs to the ferredoxin--NADP reductase type 2 family. Homodimer. FAD serves as cofactor.

The enzyme catalyses 2 reduced [2Fe-2S]-[ferredoxin] + NADP(+) + H(+) = 2 oxidized [2Fe-2S]-[ferredoxin] + NADPH. The chain is Ferredoxin--NADP reductase from Polaromonas naphthalenivorans (strain CJ2).